Here is a 428-residue protein sequence, read N- to C-terminus: Light-independent protochlorophyllide reductase subunit N (428 aa).

Cys-29, Cys-54, and Cys-115 together coordinate [4Fe-4S] cluster.

This sequence belongs to the BchN/ChlN family. As to quaternary structure, protochlorophyllide reductase is composed of three subunits; BchL, BchN and BchB. Forms a heterotetramer of two BchB and two BchN subunits. [4Fe-4S] cluster serves as cofactor.

The enzyme catalyses chlorophyllide a + oxidized 2[4Fe-4S]-[ferredoxin] + 2 ADP + 2 phosphate = protochlorophyllide a + reduced 2[4Fe-4S]-[ferredoxin] + 2 ATP + 2 H2O. The protein operates within porphyrin-containing compound metabolism; bacteriochlorophyll biosynthesis (light-independent). Functionally, component of the dark-operative protochlorophyllide reductase (DPOR) that uses Mg-ATP and reduced ferredoxin to reduce ring D of protochlorophyllide (Pchlide) to form chlorophyllide a (Chlide). This reaction is light-independent. The NB-protein (BchN-BchB) is the catalytic component of the complex. This is Light-independent protochlorophyllide reductase subunit N from Cereibacter sphaeroides (strain ATCC 17029 / ATH 2.4.9) (Rhodobacter sphaeroides).